We begin with the raw amino-acid sequence, 334 residues long: GTP 3',8-cyclase (334 aa).

The 226-residue stretch at 11–236 folds into the Radical SAM core domain; that stretch reads GFNRKIDYLR…ESTESSQGPA (226 aa). Residue R20 participates in GTP binding. [4Fe-4S] cluster-binding residues include C27 and C31. Position 33 (Y33) interacts with S-adenosyl-L-methionine. Position 34 (C34) interacts with [4Fe-4S] cluster. R69 provides a ligand contact to GTP. G73 is a binding site for S-adenosyl-L-methionine. T100 contributes to the GTP binding site. S124 is a binding site for S-adenosyl-L-methionine. K161 contacts GTP. Residue M195 coordinates S-adenosyl-L-methionine. [4Fe-4S] cluster contacts are provided by C260 and C263. Residue 265 to 267 participates in GTP binding; it reads RVR. C277 contacts [4Fe-4S] cluster.

The protein belongs to the radical SAM superfamily. MoaA family. As to quaternary structure, monomer and homodimer. The cofactor is [4Fe-4S] cluster.

It carries out the reaction GTP + AH2 + S-adenosyl-L-methionine = (8S)-3',8-cyclo-7,8-dihydroguanosine 5'-triphosphate + 5'-deoxyadenosine + L-methionine + A + H(+). It participates in cofactor biosynthesis; molybdopterin biosynthesis. In terms of biological role, catalyzes the cyclization of GTP to (8S)-3',8-cyclo-7,8-dihydroguanosine 5'-triphosphate. In Pseudomonas putida (strain W619), this protein is GTP 3',8-cyclase.